The chain runs to 957 residues: Histone-lysine N-methyltransferase, H3 lysine-9 specific SUVH3 (957 aa).

Residues 73–243 (GHPPGVALGD…PQVCKFLMHG (171 aa)) enclose the YDG domain. The disordered stretch occupies residues 182 to 209 (EAGGGEGGGGGEGGGGAKKGKGGKGGGK). The segment covering 183-198 (AGGGEGGGGGEGGGGA) has biased composition (gly residues). In terms of domain architecture, Pre-SET spans 319-441 (DVSGGQEAVP…HECGDGCSAK (123 aa)). Positions 455–920 (LPLEVFMTES…QLEELSYNYG (466 aa)) constitute an SET domain. Disordered stretches follow at residues 552 to 595 (DAAR…GGAE), 611 to 647 (AAGTAPGAGDNMDGVEGPAAQRSGGEEAAAGPGSSGA), and 783 to 805 (PPALPSTSDVGNGGTTGSGGGGG). The span at 560–578 (QQPQQQQPQQQQQQPAAGG) shows a compositional bias: low complexity. Residues 793–805 (GNGGTTGSGGGGG) show a composition bias toward gly residues. The region spanning 941-957 (FVMQCNCGAVGCIGNLM) is the Post-SET domain.

It belongs to the class V-like SAM-binding methyltransferase superfamily. Histone-lysine methyltransferase family. Suvar3-9 subfamily.

Its subcellular location is the nucleus. It is found in the chromosome. It catalyses the reaction L-lysyl(9)-[histone H3] + S-adenosyl-L-methionine = N(6)-methyl-L-lysyl(9)-[histone H3] + S-adenosyl-L-homocysteine + H(+). Histone methyltransferase. Monomethylates specifically 'Lys-9' of histone H3. H3 'Lys-9Me1' (H3K9me1) functions as an epigenetic mark of repressed chromatin. This Chlamydomonas reinhardtii (Chlamydomonas smithii) protein is Histone-lysine N-methyltransferase, H3 lysine-9 specific SUVH3 (SUVH3).